A 492-amino-acid polypeptide reads, in one-letter code: Aspartyl/glutamyl-tRNA(Asn/Gln) amidotransferase subunit B (492 aa).

It belongs to the GatB/GatE family. GatB subfamily. As to quaternary structure, heterotrimer of A, B and C subunits.

It catalyses the reaction L-glutamyl-tRNA(Gln) + L-glutamine + ATP + H2O = L-glutaminyl-tRNA(Gln) + L-glutamate + ADP + phosphate + H(+). The enzyme catalyses L-aspartyl-tRNA(Asn) + L-glutamine + ATP + H2O = L-asparaginyl-tRNA(Asn) + L-glutamate + ADP + phosphate + 2 H(+). Its function is as follows. Allows the formation of correctly charged Asn-tRNA(Asn) or Gln-tRNA(Gln) through the transamidation of misacylated Asp-tRNA(Asn) or Glu-tRNA(Gln) in organisms which lack either or both of asparaginyl-tRNA or glutaminyl-tRNA synthetases. The reaction takes place in the presence of glutamine and ATP through an activated phospho-Asp-tRNA(Asn) or phospho-Glu-tRNA(Gln). The protein is Aspartyl/glutamyl-tRNA(Asn/Gln) amidotransferase subunit B of Dehalococcoides mccartyi (strain ATCC BAA-2266 / KCTC 15142 / 195) (Dehalococcoides ethenogenes (strain 195)).